The chain runs to 568 residues: Dual specificity tyrosine-phosphorylation-regulated kinase 3 (568 aa).

The disordered stretch occupies residues methionine 1–glycine 168. Polar residues predominate over residues serine 77–lysine 114. One can recognise a Protein kinase domain in the interval tyrosine 189–isoleucine 502. ATP contacts are provided by residues isoleucine 195–valine 203 and lysine 218. Aspartate 315 functions as the Proton acceptor in the catalytic mechanism. Serine 330 bears the Phosphoserine mark. Position 349 is a phosphotyrosine (tyrosine 349). Positions arginine 448 to lysine 461 match the Nuclear localization signal motif.

Belongs to the protein kinase superfamily. CMGC Ser/Thr protein kinase family. MNB/DYRK subfamily. In terms of assembly, interacts with SIRT1. Mg(2+) is required as a cofactor. Post-translationally, protein kinase activity is activated following autophosphorylation at Tyr-349. Autophosphorylation at Ser-330 stabilizes the protein and enhances the protein kinase activity. Ubiquitinated at anaphase by the anaphase-promoting complex (APC/C), leading to its degradation by the proteasome.

It localises to the nucleus. Its subcellular location is the cytoplasm. It is found in the nucleus speckle. The protein localises to the cytoplasmic granule. The protein resides in the cytoskeleton. It localises to the microtubule organizing center. Its subcellular location is the centrosome. The enzyme catalyses L-seryl-[protein] + ATP = O-phospho-L-seryl-[protein] + ADP + H(+). It carries out the reaction L-threonyl-[protein] + ATP = O-phospho-L-threonyl-[protein] + ADP + H(+). It catalyses the reaction L-tyrosyl-[protein] + ATP = O-phospho-L-tyrosyl-[protein] + ADP + H(+). Its activity is regulated as follows. Protein kinase activity is activated following autophosphorylation at Tyr-349. Functionally, dual-specificity protein kinase that promotes disassembly of several types of membraneless organelles during mitosis, such as stress granules, nuclear speckles and pericentriolar material. Dual-specificity tyrosine-regulated kinases (DYRKs) autophosphorylate a critical tyrosine residue in their activation loop and phosphorylate their substrate on serine and threonine residues. Acts as a central dissolvase of membraneless organelles during the G2-to-M transition, after the nuclear-envelope breakdown: acts by mediating phosphorylation of multiple serine and threonine residues in unstructured domains of proteins, such as SRRM1 and PCM1. Does not mediate disassembly of all membraneless organelles: disassembly of P-body and nucleolus is not regulated by DYRK3. Dissolution of membraneless organelles at the onset of mitosis is also required to release mitotic regulators, such as ZNF207, from liquid-unmixed organelles where they are sequestered and keep them dissolved during mitosis. Regulates mTORC1 by mediating the dissolution of stress granules: during stressful conditions, DYRK3 partitions from the cytosol to the stress granule, together with mTORC1 components, which prevents mTORC1 signaling. When stress signals are gone, the kinase activity of DYRK3 is required for the dissolution of stress granule and mTORC1 relocation to the cytosol: acts by mediating the phosphorylation of the mTORC1 inhibitor AKT1S1, allowing full reactivation of mTORC1 signaling. Also acts as a negative regulator of EPO-dependent erythropoiesis: may place an upper limit on red cell production during stress erythropoiesis. Inhibits cell death due to cytokine withdrawal in hematopoietic progenitor cells. Promotes cell survival upon genotoxic stress through phosphorylation of SIRT1: this in turn inhibits p53/TP53 activity and apoptosis. The protein is Dual specificity tyrosine-phosphorylation-regulated kinase 3 of Macaca fascicularis (Crab-eating macaque).